The primary structure comprises 237 residues: Bax inhibitor 1 (237 aa).

The Cytoplasmic segment spans residues 1–29; sequence MNIFDRKINFDALLKFSHITPSTQQHLKK. Lysine 7 is covalently cross-linked (Glycyl lysine isopeptide (Lys-Gly) (interchain with G-Cter in ubiquitin)). The chain crosses the membrane as a helical span at residues 30–50; the sequence is VYASFALCMFVAAAGAYVHMV. Topologically, residues 51-52 are lumenal; it reads TH. A helical membrane pass occupies residues 53 to 73; it reads FIQAGLLSALGSLILMIWLMA. Residues 74–86 are Cytoplasmic-facing; sequence TPHSHETEQKRLG. The chain crosses the membrane as a helical span at residues 87–107; it reads LLAGFAFLTGVGLGPALEFCI. Residues 108-112 are Lumenal-facing; it reads AVNPS. Residues 113–133 traverse the membrane as a helical segment; the sequence is ILPTAFMGTAMIFTCFTLSAL. Residues 134 to 139 are Cytoplasmic-facing; the sequence is YARRRS. A helical transmembrane segment spans residues 140 to 160; the sequence is YLFLGGILMSALSLLLLSSLG. The Lumenal portion of the chain corresponds to 161-166; it reads NVFFGS. A helical membrane pass occupies residues 167–187; it reads IWLFQANLYVGLVVMCGFVLF. The Cytoplasmic portion of the chain corresponds to 188–206; sequence DTQLIIEKAEHGDQDYIWH. An intramembrane region (helical) is located at residues 207–227; sequence CIDLFLDFITVFRKLMMILAM. The Cytoplasmic segment spans residues 228–237; sequence NEKDKKKEKK.

This sequence belongs to the BI1 family. As to quaternary structure, interacts with BCL2 and BCL2L1. Interacts with ERN1. Post-translationally, ubiquitinated by BFAR, leading to proteasomal degradation. In terms of tissue distribution, highly abundant in testis.

It is found in the endoplasmic reticulum membrane. Endoplasmic reticulum (ER)-resident protein that confers cellular protection as an anti-apoptotic protein by limiting multiple stress-inducing pathways surrounding the endoplasmic reticulum and mitochondria. Inhibits the activities of the key sensor for the endoplasmic reticulum unfolded protein response IRE1alpha/ERN1 both directly and by blocking BAX/BAK binding. Modulates ER calcium homeostasis by acting as a calcium-leak channel. Negatively regulates autophagy and autophagosome formation, especially during periods of nutrient deprivation, and reduces cell survival during starvation. This chain is Bax inhibitor 1 (TMBIM6), found in Homo sapiens (Human).